The sequence spans 851 residues: Probable disease resistance protein At1g15890 (851 aa).

The region spanning 139–441 (AEKIPAPKVE…CEGFIDGNED (303 aa)) is the NB-ARC domain. 181–188 (GMGGVGKT) serves as a coordination point for ATP. 5 LRR repeats span residues 514–535 (SLRR…SNSP), 536–557 (NLST…FFRF), 560–582 (ALVV…ISKL), 584–605 (SLQY…FKEL), and 607–629 (KLIH…ATSL).

This sequence belongs to the disease resistance NB-LRR family.

Functionally, probable disease resistance protein. The protein is Probable disease resistance protein At1g15890 of Arabidopsis thaliana (Mouse-ear cress).